Consider the following 237-residue polypeptide: Ribonuclease PH (237 aa).

Phosphate-binding positions include arginine 86 and glycine 124 to arginine 126.

The protein belongs to the RNase PH family. In terms of assembly, homohexameric ring arranged as a trimer of dimers.

The enzyme catalyses tRNA(n+1) + phosphate = tRNA(n) + a ribonucleoside 5'-diphosphate. In terms of biological role, phosphorolytic 3'-5' exoribonuclease that plays an important role in tRNA 3'-end maturation. Removes nucleotide residues following the 3'-CCA terminus of tRNAs; can also add nucleotides to the ends of RNA molecules by using nucleoside diphosphates as substrates, but this may not be physiologically important. Probably plays a role in initiation of 16S rRNA degradation (leading to ribosome degradation) during starvation. This chain is Ribonuclease PH, found in Nitrobacter winogradskyi (strain ATCC 25391 / DSM 10237 / CIP 104748 / NCIMB 11846 / Nb-255).